The primary structure comprises 303 residues: MDNNEKEKSKSELLVVTGLSGAGKSLVIQCLEDMGYFCVDNLPPVLLPKFVELMEQGNPSLRKVAIAIDLRGKELFNSLVAVVDKVKSESDVIIDVMFLEASTEKLISRYKETRRAHPLMEQGKRSLINAINDEREHLSQIRSIANFVIDTTKLSPKELKERIRRYYEDEEFETFTINVTSFGFKHGIQMDADLVFDVRFLPNPYYVVDLRPLTGLDKDVYNYVMKWKETEIFFEKLTDLLDFMIPGYKKEGKSQLVIAIGCTGGQHRSVALAERLGNYLNEVFEYNVYVHHRDAHIESGEKK.

Residue 18 to 25 (GLSGAGKS) coordinates ATP. 69 to 72 (DLRG) contacts GTP.

The protein belongs to the RapZ-like family.

In terms of biological role, displays ATPase and GTPase activities. The protein is Nucleotide-binding protein USA300HOU_0794 of Staphylococcus aureus (strain USA300 / TCH1516).